The following is a 382-amino-acid chain: F-box protein At3g19470 (382 aa).

Residues 1–44 (MYNLPRDLPEEVLCRIPLTSLRPVRSTCKKWSTLSKCGSFAKKH) enclose the F-box domain.

In Arabidopsis thaliana (Mouse-ear cress), this protein is F-box protein At3g19470.